The following is a 381-amino-acid chain: Complement decay-accelerating factor (381 aa).

A signal peptide spans 1–34 (MTVARPSVPAALPLLGELPRLLLLVLLCLPAVWG). 4 Sushi domains span residues 35 to 96 (DCGL…FCNR), 96 to 160 (RSCE…FCKK), 161 to 222 (KSCP…ECRE), and 223 to 285 (IYCP…ECRG). Disulfide bonds link cysteine 36–cysteine 81 and cysteine 65–cysteine 94. Asparagine 95 is a glycosylation site (N-linked (GlcNAc...) asparagine). 6 disulfide bridges follow: cysteine 98–cysteine 145, cysteine 129–cysteine 158, cysteine 163–cysteine 204, cysteine 190–cysteine 220, cysteine 225–cysteine 267, and cysteine 253–cysteine 283. The disordered stretch occupies residues 277-354 (SGPPPECRGK…PNKGSGTTSG (78 aa)). Positions 287–309 (SLTSKVPPTVQKPTTVNVPTTEV) are enriched in polar residues. Over residues 310 to 328 (SPTSQKTTTKTTTPNAQAT) the composition is skewed to low complexity. Serine 353 is lipidated: GPI-anchor amidated serine. The propeptide at 354 to 381 (GTTRLLSGHTCFTLTGLLGTLVTMGLLT) is removed in mature form.

Belongs to the receptors of complement activation (RCA) family. As to quaternary structure, monomer (major form) and non-disulfide-linked, covalent homodimer (minor form). Interacts with ADGRE5. (Microbial infection) Interacts with coxsackievirus A21, coxsackieviruses B1, B3 and B5 capsid proteins. In terms of assembly, (Microbial infection) Interacts with human enterovirus 70 and D68 capsid proteins. As to quaternary structure, (Microbial infection) Interacts with human echoviruses 6, 7, 11, 12, 20 and 21 capsid proteins. Post-translationally, the Ser/Thr-rich domain is heavily O-glycosylated. In terms of tissue distribution, expressed on the plasma membranes of all cell types that are in intimate contact with plasma complement proteins. It is also found on the surfaces of epithelial cells lining extracellular compartments, and variants of the molecule are present in body fluids and in extracellular matrix.

The protein localises to the cell membrane. Its subcellular location is the secreted. This protein recognizes C4b and C3b fragments that condense with cell-surface hydroxyl or amino groups when nascent C4b and C3b are locally generated during C4 and c3 activation. Interaction of daf with cell-associated C4b and C3b polypeptides interferes with their ability to catalyze the conversion of C2 and factor B to enzymatically active C2a and Bb and thereby prevents the formation of C4b2a and C3bBb, the amplification convertases of the complement cascade. Inhibits complement activation by destabilizing and preventing the formation of C3 and C5 convertases, which prevents complement damage. Functionally, (Microbial infection) Acts as a receptor for Coxsackievirus A21, coxsackieviruses B1, B3 and B5. In terms of biological role, (Microbial infection) Acts as a receptor for Human enterovirus 70 and D68. Its function is as follows. (Microbial infection) Acts as a receptor for Human echoviruses 6, 7, 11, 12, 20 and 21. The chain is Complement decay-accelerating factor (CD55) from Homo sapiens (Human).